Consider the following 368-residue polypeptide: Galactoside 2-alpha-L-fucosyltransferase SEC1 (368 aa).

The interval 1-20 (MWDMRAVAPQRPAAGHPRAG) is disordered. Residues 1–31 (MWDMRAVAPQRPAAGHPRAGWPRKLKTAATR) are Cytoplasmic-facing. The chain crosses the membrane as a helical span at residues 32 to 52 (FWATCPSSSTVCFLFVIFAVS). Topologically, residues 53–368 (TVFHCHRRLA…NLGQARESHP (316 aa)) are lumenal.

It belongs to the glycosyltransferase 11 family. Kidney.

The protein resides in the golgi apparatus. It localises to the golgi stack membrane. The catalysed reaction is a ganglioside GM1 + GDP-beta-L-fucose = a ganglioside Fuc-GM1 + GDP + H(+). It participates in protein modification; protein glycosylation. Its function is as follows. Catalyzes the transfer of alpha 1,2-linked fucose to ganglioside GM1 and galacto-N-biose. The sequence is that of Galactoside 2-alpha-L-fucosyltransferase SEC1 from Bos taurus (Bovine).